A 402-amino-acid chain; its full sequence is Protein rds1 (402 aa).

Functionally, may have a function in stress-related responses of the cell. The chain is Protein rds1 (rds1) from Schizosaccharomyces pombe (strain 972 / ATCC 24843) (Fission yeast).